The chain runs to 225 residues: Uracil-DNA glycosylase (225 aa).

Aspartate 65 (proton acceptor) is an active-site residue.

It belongs to the uracil-DNA glycosylase (UDG) superfamily. UNG family.

It localises to the cytoplasm. It catalyses the reaction Hydrolyzes single-stranded DNA or mismatched double-stranded DNA and polynucleotides, releasing free uracil.. Functionally, excises uracil residues from the DNA which can arise as a result of misincorporation of dUMP residues by DNA polymerase or due to deamination of cytosine. This is Uracil-DNA glycosylase from Bacillus cereus (strain ZK / E33L).